A 622-amino-acid polypeptide reads, in one-letter code: UvrABC system protein C (622 aa).

The GIY-YIG domain maps to 12 to 91; the sequence is SSPGVYIMKD…IKKYRPKYNF (80 aa). The UVR domain occupies 201 to 236; sequence REILKIFRERMSAAAAAEKYEKAARFRDLIRSIEVT.

It belongs to the UvrC family. Interacts with UvrB in an incision complex.

The protein resides in the cytoplasm. The UvrABC repair system catalyzes the recognition and processing of DNA lesions. UvrC both incises the 5' and 3' sides of the lesion. The N-terminal half is responsible for the 3' incision and the C-terminal half is responsible for the 5' incision. The polypeptide is UvrABC system protein C (Geotalea daltonii (strain DSM 22248 / JCM 15807 / FRC-32) (Geobacter daltonii)).